Consider the following 155-residue polypeptide: Ribonuclease H (155 aa).

The 142-residue stretch at 9–150 (DGQQVEMWTD…ADALANQGME (142 aa)) folds into the RNase H type-1 domain. Positions 18, 56, 78, and 142 each coordinate Mg(2+).

Belongs to the RNase H family. Monomer. Requires Mg(2+) as cofactor.

Its subcellular location is the cytoplasm. It carries out the reaction Endonucleolytic cleavage to 5'-phosphomonoester.. In terms of biological role, endonuclease that specifically degrades the RNA of RNA-DNA hybrids. The chain is Ribonuclease H from Bordetella pertussis (strain Tohama I / ATCC BAA-589 / NCTC 13251).